The sequence spans 265 residues: Type 1 encapsulin shell protein (265 aa).

FMN contacts are provided by residues 79-81 (RAT), W87, and 90-94 (DNLER). The interval 184–189 (EAGHYP) is pore-forming loop. E235 provides a ligand contact to FMN.

Belongs to the encapsulin family. Family 1 subfamily. As to quaternary structure, homomultimeric. This encapsulin nanocompartment is formed by 60 subunits; monomers form 12 pentamers which assemble to form shells. There are 12 pores where the pentamers meet as well as 3-fold axis channels and dimer channels; none are larger than 3-4 Angstroms in diameter. The N-terminus of the protein is inside the shell, the C-terminus is outside. Probably 3, 4 or 5 Flp cargo decamers bind inside the encapulin nanocompartment. FMN is required as a cofactor.

It is found in the encapsulin nanocompartment. Proteolysis activated by calcium and cobalt. Shell component of a type 1 encapsulin nanocompartment. Assembles into proteinaceous shells 23-24 nm in diameter with 2-2.5 nm thick walls. Cargo protein Flp (ferritin-like protein, probably stores iron) is targeted to the interior via its C-terminal extension; empty intact shells can be isolated in the absence of cargo protein. Fe(2+) may be able to pass though the 5-fold and dimer channels in the protein shell. In terms of biological role, protease that exhibits activity toward chymotrypsin and trypsin substrates. Probably does not have antibacterial activity. In Thermotoga maritima (strain ATCC 43589 / DSM 3109 / JCM 10099 / NBRC 100826 / MSB8), this protein is Type 1 encapsulin shell protein.